The primary structure comprises 932 residues: Protocadherin gamma-A6 (932 aa).

Positions 1–29 are cleaved as a signal peptide; it reads MAPPQRHPQRSEQVLLLTLLGTLWGAAAA. 6 consecutive Cadherin domains span residues 30-133, 134-242, 243-347, 348-452, 453-562, and 570-682; these read QIRY…TPRF, LKEE…TPVF, TQPV…VPEV, VVTS…PPTF, PHSS…APEI, and DGST…EPSA. The Extracellular segment spans residues 30–692; it reads QIRYSIPEEL…KPNDSDLTLY (663 aa). The N-linked (GlcNAc...) asparagine glycan is linked to Asn81. Asn419 and Asn545 each carry an N-linked (GlcNAc...) asparagine glycan. Residue Asn685 is glycosylated (N-linked (GlcNAc...) asparagine). The helical transmembrane segment at 693 to 713 threads the bilayer; that stretch reads LVVAVAAVSCVFLAFVIVLLA. At 714–932 the chain is on the cytoplasmic side; that stretch reads LRLQRWHKSR…KKKSGKKEKK (219 aa). Disordered regions lie at residues 803 to 841 and 902 to 932; these read DPRQ…WPNN and ATLT…KEKK. The span at 806-841 shows a compositional bias: polar residues; it reads QLQQAPPNTDWRFSQAQRPGTSGSQNGDDTGTWPNN. Residues 922–932 show a composition bias toward basic residues; it reads NKKKSGKKEKK.

Its subcellular location is the cell membrane. Its function is as follows. Potential calcium-dependent cell-adhesion protein. May be involved in the establishment and maintenance of specific neuronal connections in the brain. In Pan troglodytes (Chimpanzee), this protein is Protocadherin gamma-A6 (PCDHGA6).